The following is a 133-amino-acid chain: Small ribosomal subunit protein uS8 (133 aa).

This sequence belongs to the universal ribosomal protein uS8 family. As to quaternary structure, part of the 30S ribosomal subunit. Contacts proteins S5 and S12.

Functionally, one of the primary rRNA binding proteins, it binds directly to 16S rRNA central domain where it helps coordinate assembly of the platform of the 30S subunit. The sequence is that of Small ribosomal subunit protein uS8 from Mycoplasma mobile (strain ATCC 43663 / 163K / NCTC 11711) (Mesomycoplasma mobile).